The following is a 233-amino-acid chain: Probable transglycosylase IsaA (233 aa).

A signal peptide spans 1 to 29 (MKKTIMASSLAVALGVTGYAAGTGHQAHA).

The protein belongs to the transglycosylase family. IsaA subfamily.

It localises to the secreted. Is able to cleave peptidoglycan. This Staphylococcus aureus (strain Mu3 / ATCC 700698) protein is Probable transglycosylase IsaA (isaA).